The chain runs to 837 residues: Protein kintoun (837 aa).

4 disordered regions span residues 100–119, 205–224, 230–249, and 363–515; these read APSS…GSHW, LPGV…LPDF, YPAA…LQPA, and AAAP…GPGT. Residues 233–242 show a composition bias toward pro residues; it reads APGPRAPSPP. Residues 428–442 are compositionally biased toward basic and acidic residues; the sequence is GEERVPKPGEQDLSR. The span at 445 to 459 shows a compositional bias: low complexity; sequence GSPPGSVEEPSPGGE. Phosphoserine occurs at positions 461 and 467. Over residues 484 to 498 the composition is skewed to basic and acidic residues; the sequence is ESARGDSSVETREES. A phosphoserine mark is found at S640, S641, and S773.

This sequence belongs to the PIH1 family. Kintoun subfamily. As to quaternary structure, interacts with CFAP300. Interacts with DNAAF4. Interacts with DNAAF6/PIH1D3. Interacts with DNAI2 and HSPA1A.

It is found in the cytoplasm. The protein localises to the dynein axonemal particle. Functionally, required for cytoplasmic pre-assembly of axonemal dyneins, thereby playing a central role in motility in cilia and flagella. Involved in pre-assembly of dynein arm complexes in the cytoplasm before intraflagellar transport loads them for the ciliary compartment. The chain is Protein kintoun from Homo sapiens (Human).